Reading from the N-terminus, the 91-residue chain is Long neurotoxin OH-37 (91 aa).

An N-terminal signal peptide occupies residues 1-21; the sequence is MKTLLLTLVVMTIVCLDLGYS. 5 disulfides stabilise this stretch: C24-C41, C34-C62, C47-C51, C66-C77, and C78-C83.

It belongs to the three-finger toxin family. Long-chain subfamily. Type II alpha-neurotoxin sub-subfamily. Expressed by the venom gland.

The protein resides in the secreted. Binds with high affinity to muscular (alpha-1/CHRNA1) and neuronal (alpha-7/CHRNA7) nicotinic acetylcholine receptor (nAChR) and inhibits acetylcholine from binding to the receptor, thereby impairing neuromuscular and neuronal transmission. The chain is Long neurotoxin OH-37 from Ophiophagus hannah (King cobra).